The chain runs to 610 residues: Calmegin (610 aa).

A signal peptide spans 1 to 19; it reads MHFQAFWLCLGLLFISINA. Residues 20-471 lie on the Lumenal side of the membrane; the sequence is EFMDDDVETE…LMAAAEGHPW (452 aa). At Lys128 the chain carries N6-acetyllysine. A disulfide bridge connects residues Cys151 and Cys185. Residues 258–338 form a disordered region; that stretch reads VPPIKPPKEI…KPDDWNEDTD (81 aa). Positions 263 to 284 are enriched in basic and acidic residues; sequence PPKEIEDPNDKKPEEWDERAKI. A run of 8 repeats spans residues 267-280, 284-297, 303-316, 322-335, 339-352, 356-369, 370-383, and 384-397. The segment covering 317 to 332 has biased composition (basic and acidic residues); it reads DEPKFIPDPNAEKPDD. Positions 317–350 are interaction with PPIB; the sequence is DEPKFIPDPNAEKPDDWNEDTDGEWEAPQILNPA. Cys351 and Cys355 form a disulfide bridge. The helical transmembrane segment at 472 to 492 threads the bilayer; the sequence is LWLIYLVTAGVPIALITSFCW. Over 493-610 the chain is Cytoplasmic; sequence PRKVKKKHKD…SVRKRRVRKD (118 aa). Residues 521 to 548 show a composition bias toward basic and acidic residues; the sequence is QEEKEEKAALEKPMDLEEEKKQNDGEML. The tract at residues 521 to 610 is disordered; it reads QEEKEEKAAL…SVRKRRVRKD (90 aa). The segment covering 549 to 571 has biased composition (acidic residues); the sequence is EKEEESEPEEKSEEEIEIIEGQE. 7 positions are modified to phosphoserine: Ser560, Ser576, Ser579, Ser581, Ser591, Ser594, and Ser601. The segment covering 601–610 has biased composition (basic residues); it reads SVRKRRVRKD.

This sequence belongs to the calreticulin family. As to quaternary structure, interacts with PPIB. Interacts with ADAM2. Interacts with PDILT. In terms of tissue distribution, detected in testis (at protein level). Detected in testis.

The protein localises to the endoplasmic reticulum membrane. Functions during spermatogenesis as a chaperone for a range of client proteins that are important for sperm adhesion onto the egg zona pellucida and for subsequent penetration of the zona pellucida. Required for normal sperm migration from the uterus into the oviduct. Required for normal male fertility. Binds calcium ions. The protein is Calmegin (CLGN) of Homo sapiens (Human).